Consider the following 133-residue polypeptide: MSRHKSKSIPGRNLRLADQIQKDLAGIIQREIDMTRAGLITLSGVELSADYAHAKVYFTVLGAEPDTAAALLNEKAGWLHSQLYKLLHIHTVPTLRFVHDPQITRGIEMSVLIDRANRPGPHSGVPDEPEDQS.

This sequence belongs to the RbfA family. Monomer. Binds 30S ribosomal subunits, but not 50S ribosomal subunits or 70S ribosomes.

It is found in the cytoplasm. One of several proteins that assist in the late maturation steps of the functional core of the 30S ribosomal subunit. Associates with free 30S ribosomal subunits (but not with 30S subunits that are part of 70S ribosomes or polysomes). Required for efficient processing of 16S rRNA. May interact with the 5'-terminal helix region of 16S rRNA. The sequence is that of Ribosome-binding factor A from Bordetella pertussis (strain Tohama I / ATCC BAA-589 / NCTC 13251).